Consider the following 366-residue polypeptide: Probable UDP-arabinopyranose mutase 2 (366 aa).

The DXD motif signature appears at D104–D106. An N-linked (Glc...) arginine glycan is attached at R152.

Belongs to the RGP family. As to quaternary structure, homopentamer or homohexamer. Requires Mn(2+) as cofactor. It depends on Mg(2+) as a cofactor. Reversibly glycosylated by UDP-glucose, UDP-xylose and UDP-galactose, but not UDP-mannose. Expressed in all tissues tested, including root, tuber, leaf, petiole, shoot, stolon and stem.

The protein resides in the secreted. It localises to the cell wall. Its subcellular location is the cell junction. It is found in the plasmodesma. The protein localises to the golgi apparatus. The enzyme catalyses UDP-beta-L-arabinofuranose = UDP-beta-L-arabinopyranose. Functionally, probable UDP-L-arabinose mutase involved in the biosynthesis of cell wall non-cellulosic polysaccharides. Was initially shown to possess an autoglycosylating activity which is dependent on the presence of UDP-glucose and manganese. The chain is Probable UDP-arabinopyranose mutase 2 from Solanum tuberosum (Potato).